A 336-amino-acid chain; its full sequence is Holliday junction branch migration complex subunit RuvB (336 aa).

The large ATPase domain (RuvB-L) stretch occupies residues 4–184; that stretch reads ADRLISAGAT…FGIVQRLEFY (181 aa). Residues isoleucine 23, arginine 24, glycine 65, lysine 68, threonine 69, threonine 70, 131-133, arginine 174, tyrosine 184, and arginine 221 contribute to the ATP site; that span reads EDY. Threonine 69 is a binding site for Mg(2+). The interval 185–255 is small ATPAse domain (RuvB-S); that stretch reads QVPDLQHIVG…IAAQALDMLN (71 aa). Residues 258–336 form a head domain (RuvB-H) region; it reads AEGFDYMDRK…HFGITPPEMP (79 aa). 3 residues coordinate DNA: arginine 294, arginine 313, and arginine 318.

Belongs to the RuvB family. As to quaternary structure, homohexamer. Forms an RuvA(8)-RuvB(12)-Holliday junction (HJ) complex. HJ DNA is sandwiched between 2 RuvA tetramers; dsDNA enters through RuvA and exits via RuvB. An RuvB hexamer assembles on each DNA strand where it exits the tetramer. Each RuvB hexamer is contacted by two RuvA subunits (via domain III) on 2 adjacent RuvB subunits; this complex drives branch migration. In the full resolvosome a probable DNA-RuvA(4)-RuvB(12)-RuvC(2) complex forms which resolves the HJ.

Its subcellular location is the cytoplasm. The catalysed reaction is ATP + H2O = ADP + phosphate + H(+). Functionally, the RuvA-RuvB-RuvC complex processes Holliday junction (HJ) DNA during genetic recombination and DNA repair, while the RuvA-RuvB complex plays an important role in the rescue of blocked DNA replication forks via replication fork reversal (RFR). RuvA specifically binds to HJ cruciform DNA, conferring on it an open structure. The RuvB hexamer acts as an ATP-dependent pump, pulling dsDNA into and through the RuvAB complex. RuvB forms 2 homohexamers on either side of HJ DNA bound by 1 or 2 RuvA tetramers; 4 subunits per hexamer contact DNA at a time. Coordinated motions by a converter formed by DNA-disengaged RuvB subunits stimulates ATP hydrolysis and nucleotide exchange. Immobilization of the converter enables RuvB to convert the ATP-contained energy into a lever motion, pulling 2 nucleotides of DNA out of the RuvA tetramer per ATP hydrolyzed, thus driving DNA branch migration. The RuvB motors rotate together with the DNA substrate, which together with the progressing nucleotide cycle form the mechanistic basis for DNA recombination by continuous HJ branch migration. Branch migration allows RuvC to scan DNA until it finds its consensus sequence, where it cleaves and resolves cruciform DNA. The protein is Holliday junction branch migration complex subunit RuvB of Salmonella arizonae (strain ATCC BAA-731 / CDC346-86 / RSK2980).